The chain runs to 399 residues: Protein translocase subunit SecD (399 aa).

6 consecutive transmembrane segments (helical) span residues 7–27, 239–259, 262–282, 286–306, 329–351, and 357–381; these read IKTA…LTFP, VIGA…LGLV, IALL…NATL, GVAG…LIFA, ALRA…FYFG, and GFAV…RTLL.

The protein belongs to the SecD/SecF family. SecD subfamily. In terms of assembly, forms a complex with SecF. Part of the essential Sec protein translocation apparatus which comprises SecA, SecYEG and auxiliary proteins SecDF. Other proteins may also be involved.

It localises to the cell inner membrane. Its function is as follows. Part of the Sec protein translocase complex. Interacts with the SecYEG preprotein conducting channel. SecDF uses the proton motive force (PMF) to complete protein translocation after the ATP-dependent function of SecA. This chain is Protein translocase subunit SecD, found in Dictyoglomus turgidum (strain DSM 6724 / Z-1310).